A 184-amino-acid polypeptide reads, in one-letter code: Peptide deformylase (184 aa).

Residues cysteine 111 and histidine 154 each contribute to the Fe cation site. The active site involves glutamate 155. Histidine 158 lines the Fe cation pocket.

This sequence belongs to the polypeptide deformylase family. Fe(2+) is required as a cofactor.

The catalysed reaction is N-terminal N-formyl-L-methionyl-[peptide] + H2O = N-terminal L-methionyl-[peptide] + formate. Its function is as follows. Removes the formyl group from the N-terminal Met of newly synthesized proteins. Requires at least a dipeptide for an efficient rate of reaction. N-terminal L-methionine is a prerequisite for activity but the enzyme has broad specificity at other positions. This chain is Peptide deformylase, found in Pediococcus pentosaceus (strain ATCC 25745 / CCUG 21536 / LMG 10740 / 183-1w).